A 259-amino-acid chain; its full sequence is Global transcriptional regulator CodY (259 aa).

The interval 1-155 (MDLLTRTRKI…GATVVGMEIL (155 aa)) is GAF domain. A DNA-binding region (H-T-H motif) is located at residues 203 to 222 (ASKIADRVGITRSVIVNALR). Ser215 bears the Phosphoserine mark.

Belongs to the CodY family.

Its subcellular location is the cytoplasm. In terms of biological role, DNA-binding global transcriptional regulator which is involved in the adaptive response to starvation and acts by directly or indirectly controlling the expression of numerous genes in response to nutrient availability. During rapid exponential growth, CodY is highly active and represses genes whose products allow adaptation to nutrient depletion. This chain is Global transcriptional regulator CodY, found in Shouchella clausii (strain KSM-K16) (Alkalihalobacillus clausii).